A 384-amino-acid chain; its full sequence is MLASYASDPLKSRGRLYKEIPTSYRNEFERDRDRIIHTNAFRRLQYKTQVFINHEGDHYRNRLTHSLEVSTVARSVASTLNLSNDLAETIALAHDLGHTPFGHAGERALNECMREYNGFSHNAQSLKILTLLEKRYAAYNGVNLTWEVLEGIVKHNGPILGEINEYIAEYNKQNDLELSTYASAEAQIAALADDISYISHDLEDSIGAKIIDFNSLAELKYIDQHVVELKSKFKNISSSCLIYEVVRKLIHELITDLLWQTKENLNKEKITNIDEIRNLNYQIVDFTEKTNKNIKETKKFLHERVYKSNKITAISLKCTKIVQGLFKIYMDDINLLPVNWKMLIDSNETYSKARVVADYIAGMTDRFAIQEYNQLCSTSYITCF.

The region spanning 62–198 (RLTHSLEVST…AALADDISYI (137 aa)) is the HD domain.

The protein belongs to the dGTPase family. Type 2 subfamily.

The sequence is that of Deoxyguanosinetriphosphate triphosphohydrolase-like protein from Rickettsia peacockii (strain Rustic).